Here is a 250-residue protein sequence, read N- to C-terminus: S-adenosyl-L-methionine-dependent 2-deoxy-scyllo-inosamine dehydrogenase (250 aa).

[4Fe-4S] cluster-binding residues include C16, C20, C23, C169, C187, and E223.

It belongs to the radical SAM superfamily. The cofactor is [4Fe-4S] cluster.

The catalysed reaction is 2-deoxy-scyllo-inosamine + S-adenosyl-L-methionine = 3-amino-2,3-dideoxy-scyllo-inosose + 5'-deoxyadenosine + L-methionine + H(+). Its pathway is antibiotic biosynthesis; butirosin biosynthesis. Its function is as follows. Catalyzes the radical S-adenosyl-L-methionine (SAM)-dependent two-electron oxidation of 2-deoxy-scyllo-inosamine (DOIA) to amino-dideoxy-scyllo-inosose (amino-DOI) in the biosynthetic pathway of butirosin. This is S-adenosyl-L-methionine-dependent 2-deoxy-scyllo-inosamine dehydrogenase (btrN) from Niallia circulans (Bacillus circulans).